Reading from the N-terminus, the 197-residue chain is MKFHLVLLLAIVPLTLARHPHGKFNRHASYDDREKHRGYRKENDYLNYDLKGKFSRTRQAYLHGSFDKYGNENERGRYDDQGKYSLAGKSAHDGKYGMYGNMYAKGDFKAYGNEDEGAKFEEVTTFRRGGGYDSYGKKKSYDDYDTKGHLKKFANKGRQSKFDMYGNVKADGQAISNGNMNATVCLTPMANTISMAK.

A signal peptide spans 1 to 17 (MKFHLVLLLAIVPLTLA).

The polypeptide is Putative eggshell protein (Fasciola hepatica (Liver fluke)).